The sequence spans 226 residues: 2-C-methyl-D-erythritol 4-phosphate cytidylyltransferase (226 aa).

Belongs to the IspD/TarI cytidylyltransferase family. IspD subfamily.

The catalysed reaction is 2-C-methyl-D-erythritol 4-phosphate + CTP + H(+) = 4-CDP-2-C-methyl-D-erythritol + diphosphate. It participates in isoprenoid biosynthesis; isopentenyl diphosphate biosynthesis via DXP pathway; isopentenyl diphosphate from 1-deoxy-D-xylulose 5-phosphate: step 2/6. Catalyzes the formation of 4-diphosphocytidyl-2-C-methyl-D-erythritol from CTP and 2-C-methyl-D-erythritol 4-phosphate (MEP). This Bacillus cytotoxicus (strain DSM 22905 / CIP 110041 / 391-98 / NVH 391-98) protein is 2-C-methyl-D-erythritol 4-phosphate cytidylyltransferase.